Consider the following 317-residue polypeptide: Serpentine receptor class delta-47 (317 aa).

Transmembrane regions (helical) follow at residues 8 to 28 (IFYP…FVVV), 42 to 62 (VLFC…LLQL), 89 to 109 (CLYF…LLTI), 128 to 148 (IVII…IYSV), 185 to 205 (YLII…GLYT), 239 to 259 (ACLP…VIGT), and 270 to 290 (ISVL…YSVA).

Belongs to the nematode receptor-like protein srd family.

It localises to the membrane. This is Serpentine receptor class delta-47 (srd-47) from Caenorhabditis elegans.